Reading from the N-terminus, the 183-residue chain is PLAT domain-containing protein 2 (183 aa).

The N-terminal stretch at 1 to 25 is a signal peptide; sequence MMPRRDVLFLSLLLVIATVSAVALA. Residues 31–158 form the PLAT domain; the sequence is CVYTFFLRTG…SPYELSAVRN (128 aa).

The protein resides in the endoplasmic reticulum. In terms of biological role, involved in response to abiotic stress. In Arabidopsis thaliana (Mouse-ear cress), this protein is PLAT domain-containing protein 2.